The sequence spans 125 residues: uncharacterized protein (125 aa).

This is an uncharacterized protein from Mycobacterium bovis (strain ATCC BAA-935 / AF2122/97).